The primary structure comprises 70 residues: Virion membrane protein OPG139 (70 aa).

A helical transmembrane segment spans residues 1–21; the sequence is MIGILLLIGICVAVTVAILYS. Over 22-70 the chain is Virion surface; the sequence is MYNKIKNSQNPNPSPNLNSPPPEPKNTKFVNNLEKDHISSLYNLVKSSV. The disordered stretch occupies residues 30 to 50; the sequence is QNPNPSPNLNSPPPEPKNTKF. Over residues 33-45 the composition is skewed to pro residues; it reads NPSPNLNSPPPEP. S40 bears the Phosphoserine; by host mark.

It belongs to the orthopoxvirus OPG139 family. In terms of processing, phosphorylated by a OPG054-independent mechanism.

The protein resides in the virion membrane. Functionally, essential for the encapsidation of DNA into immature virions (IV) and the subsequent maturation of IV into mature virions (MV). This chain is Virion membrane protein OPG139 (OPG139), found in Homo sapiens (Human).